Here is a 271-residue protein sequence, read N- to C-terminus: Formamidopyrimidine-DNA glycosylase (271 aa).

Pro-2 (schiff-base intermediate with DNA) is an active-site residue. Residue Glu-3 is the Proton donor of the active site. The active-site Proton donor; for beta-elimination activity is Lys-57. Residues His-90, Arg-109, and Lys-151 each contribute to the DNA site. The segment at His-236 to Thr-270 adopts an FPG-type zinc-finger fold. Arg-260 (proton donor; for delta-elimination activity) is an active-site residue.

Belongs to the FPG family. In terms of assembly, monomer. The cofactor is Zn(2+).

It carries out the reaction Hydrolysis of DNA containing ring-opened 7-methylguanine residues, releasing 2,6-diamino-4-hydroxy-5-(N-methyl)formamidopyrimidine.. The enzyme catalyses 2'-deoxyribonucleotide-(2'-deoxyribose 5'-phosphate)-2'-deoxyribonucleotide-DNA = a 3'-end 2'-deoxyribonucleotide-(2,3-dehydro-2,3-deoxyribose 5'-phosphate)-DNA + a 5'-end 5'-phospho-2'-deoxyribonucleoside-DNA + H(+). Its function is as follows. Involved in base excision repair of DNA damaged by oxidation or by mutagenic agents. Acts as a DNA glycosylase that recognizes and removes damaged bases. Has a preference for oxidized purines, such as 7,8-dihydro-8-oxoguanine (8-oxoG). Has AP (apurinic/apyrimidinic) lyase activity and introduces nicks in the DNA strand. Cleaves the DNA backbone by beta-delta elimination to generate a single-strand break at the site of the removed base with both 3'- and 5'-phosphates. This Shewanella sp. (strain MR-4) protein is Formamidopyrimidine-DNA glycosylase.